Consider the following 425-residue polypeptide: 3-phosphoshikimate 1-carboxyvinyltransferase (425 aa).

Lys-20, Ser-21, and Arg-25 together coordinate 3-phosphoshikimate. Position 20 (Lys-20) interacts with phosphoenolpyruvate. Gly-92 and Arg-120 together coordinate phosphoenolpyruvate. 4 residues coordinate 3-phosphoshikimate: Ser-165, Gln-167, Asp-312, and Lys-339. Gln-167 is a binding site for phosphoenolpyruvate. Catalysis depends on Asp-312, which acts as the Proton acceptor. Residues Arg-343 and Arg-385 each contribute to the phosphoenolpyruvate site.

This sequence belongs to the EPSP synthase family. Monomer.

Its subcellular location is the cytoplasm. It carries out the reaction 3-phosphoshikimate + phosphoenolpyruvate = 5-O-(1-carboxyvinyl)-3-phosphoshikimate + phosphate. Its pathway is metabolic intermediate biosynthesis; chorismate biosynthesis; chorismate from D-erythrose 4-phosphate and phosphoenolpyruvate: step 6/7. Catalyzes the transfer of the enolpyruvyl moiety of phosphoenolpyruvate (PEP) to the 5-hydroxyl of shikimate-3-phosphate (S3P) to produce enolpyruvyl shikimate-3-phosphate and inorganic phosphate. In Alkaliphilus metalliredigens (strain QYMF), this protein is 3-phosphoshikimate 1-carboxyvinyltransferase.